Here is a 347-residue protein sequence, read N- to C-terminus: S-adenosylmethionine:tRNA ribosyltransferase-isomerase (347 aa).

The protein belongs to the QueA family. Monomer.

The protein resides in the cytoplasm. It carries out the reaction 7-aminomethyl-7-carbaguanosine(34) in tRNA + S-adenosyl-L-methionine = epoxyqueuosine(34) in tRNA + adenine + L-methionine + 2 H(+). Its pathway is tRNA modification; tRNA-queuosine biosynthesis. Its function is as follows. Transfers and isomerizes the ribose moiety from AdoMet to the 7-aminomethyl group of 7-deazaguanine (preQ1-tRNA) to give epoxyqueuosine (oQ-tRNA). The protein is S-adenosylmethionine:tRNA ribosyltransferase-isomerase of Gluconobacter oxydans (strain 621H) (Gluconobacter suboxydans).